Consider the following 132-residue polypeptide: Putative apolipoprotein(a)-like protein 2 (132 aa).

The N-terminal stretch at 1–21 (MEHKEVVLLLLLFLKSAPTET) is a signal peptide. One can recognise a Kringle domain in the interval 27–105 (ECYHSNGQSY…RWEYCNLTRC (79 aa)). 3 disulfide bridges follow: C28–C105, C49–C88, and C77–C100. N-linked (GlcNAc...) asparagine glycosylation is present at N101.

In terms of tissue distribution, expressed in liver but not in other tissues tested.

The protein localises to the secreted. The sequence is that of Putative apolipoprotein(a)-like protein 2 (LPAL2) from Homo sapiens (Human).